A 140-amino-acid polypeptide reads, in one-letter code: Large ribosomal subunit protein uL14 (140 aa).

The protein belongs to the universal ribosomal protein uL14 family.

The chain is Large ribosomal subunit protein uL14 (RpL23) from Drosophila melanogaster (Fruit fly).